Reading from the N-terminus, the 349-residue chain is MASKKVCIVGSGNWGSAIAKIVGGNAAQLAQFDPRVTMWVFEEDIGGKKLTEIINTQHENVKYLPGHKLPPNVVAVPDVVQAAADADILIFVVPHQFIGKICDQLKGHLKANATGISLIKGVDEGPNGLKLISEVIGEHLGIPMSVLMGANIASEVADEKFCETTIGCKDPAQGQLLKELMQTPNFRITVVQEVDTVEICGALKNVVAVGAGFCDGLGFGDNTKAAVIRLGLMEMIAFAKLFRSGPVSSATFLESCGVADLITTCYGGRNRKVAEAFARTGKSIEQLEKELLNGQKLQGPETARELHSILQHKGLVDKFPLFMAVYKVCYEGQPVGEFIRCLQNHPEHM.

10 to 15 (GSGNWG) lines the NAD(+) pocket. Residue lysine 120 coordinates substrate. Alanine 153 contacts NAD(+). Position 154 is a phosphoserine (serine 154). Lysine 204 acts as the Proton acceptor in catalysis. Arginine 269 contacts NAD(+). 269-270 (RN) provides a ligand contact to substrate. Lysine 289 is subject to N6-succinyllysine. The NAD(+) site is built by lysine 296 and glutamine 298. At tyrosine 326 the chain carries Phosphotyrosine.

The protein belongs to the NAD-dependent glycerol-3-phosphate dehydrogenase family. In terms of assembly, homodimer.

It is found in the cytoplasm. The enzyme catalyses sn-glycerol 3-phosphate + NAD(+) = dihydroxyacetone phosphate + NADH + H(+). In terms of biological role, has glycerol-3-phosphate dehydrogenase activity. The sequence is that of Glycerol-3-phosphate dehydrogenase [NAD(+)], cytoplasmic (GPD1) from Pongo abelii (Sumatran orangutan).